The chain runs to 556 residues: Urocanate hydratase (556 aa).

NAD(+) contacts are provided by residues 52–53 (GG), Q130, 176–178 (GMG), E196, R201, 242–243 (NA), 263–267 (QTSAH), 273–274 (YL), and Y322. C410 is a catalytic residue. G492 is a binding site for NAD(+).

It belongs to the urocanase family. NAD(+) serves as cofactor.

It localises to the cytoplasm. The catalysed reaction is 4-imidazolone-5-propanoate = trans-urocanate + H2O. It functions in the pathway amino-acid degradation; L-histidine degradation into L-glutamate; N-formimidoyl-L-glutamate from L-histidine: step 2/3. Catalyzes the conversion of urocanate to 4-imidazolone-5-propionate. The protein is Urocanate hydratase of Shewanella woodyi (strain ATCC 51908 / MS32).